Here is a 406-residue protein sequence, read N- to C-terminus: Imidazolonepropionase (406 aa).

Residues H74 and H76 each contribute to the Fe(3+) site. H74 and H76 together coordinate Zn(2+). R83, Y146, and H179 together coordinate 4-imidazolone-5-propanoate. An N-formimidoyl-L-glutamate-binding site is contributed by Y146. H240 contacts Fe(3+). H240 contributes to the Zn(2+) binding site. E243 is a 4-imidazolone-5-propanoate binding site. D314 serves as a coordination point for Fe(3+). D314 serves as a coordination point for Zn(2+). Residues N316 and G318 each contribute to the N-formimidoyl-L-glutamate site. S319 contributes to the 4-imidazolone-5-propanoate binding site.

It belongs to the metallo-dependent hydrolases superfamily. HutI family. The cofactor is Zn(2+). Fe(3+) serves as cofactor.

The protein resides in the cytoplasm. It catalyses the reaction 4-imidazolone-5-propanoate + H2O = N-formimidoyl-L-glutamate. It participates in amino-acid degradation; L-histidine degradation into L-glutamate; N-formimidoyl-L-glutamate from L-histidine: step 3/3. Its function is as follows. Catalyzes the hydrolytic cleavage of the carbon-nitrogen bond in imidazolone-5-propanoate to yield N-formimidoyl-L-glutamate. It is the third step in the universal histidine degradation pathway. This Kosmotoga olearia (strain ATCC BAA-1733 / DSM 21960 / TBF 19.5.1) protein is Imidazolonepropionase.